The primary structure comprises 209 residues: Uracil phosphoribosyltransferase (209 aa).

Residues Arg-79, Arg-104, and 131-139 each bind 5-phospho-alpha-D-ribose 1-diphosphate; that span reads DPMLATGNS. Uracil-binding positions include Ile-194 and 199–201; that span reads GDA. Asp-200 is a 5-phospho-alpha-D-ribose 1-diphosphate binding site.

It belongs to the UPRTase family. Requires Mg(2+) as cofactor.

It carries out the reaction UMP + diphosphate = 5-phospho-alpha-D-ribose 1-diphosphate + uracil. Its pathway is pyrimidine metabolism; UMP biosynthesis via salvage pathway; UMP from uracil: step 1/1. Allosterically activated by GTP. In terms of biological role, catalyzes the conversion of uracil and 5-phospho-alpha-D-ribose 1-diphosphate (PRPP) to UMP and diphosphate. The polypeptide is Uracil phosphoribosyltransferase (Rhodococcus jostii (strain RHA1)).